Here is a 328-residue protein sequence, read N- to C-terminus: Octanoyltransferase, mitochondrial (328 aa).

The BPL/LPL catalytic domain occupies 108–312 (MKPNPIILTF…EMTKLLGIKT (205 aa)). Substrate-binding positions include 162–169 (RGGQVTFH), 241–243 (SVG), and 254–256 (GVA). Cys272 (acyl-thioester intermediate) is an active-site residue.

The protein belongs to the LipB family.

The protein localises to the mitochondrion. The enzyme catalyses octanoyl-[ACP] + L-lysyl-[protein] = N(6)-octanoyl-L-lysyl-[protein] + holo-[ACP] + H(+). It participates in protein modification; protein lipoylation via endogenous pathway; protein N(6)-(lipoyl)lysine from octanoyl-[acyl-carrier-protein]: step 1/2. Catalyzes the transfer of endogenously produced octanoic acid from octanoyl-acyl-carrier-protein onto the lipoyl domains of lipoate-dependent enzymes. Lipoyl-ACP can also act as a substrate although octanoyl-ACP is likely to be the physiological substrate. In Saccharomyces cerevisiae (strain ATCC 204508 / S288c) (Baker's yeast), this protein is Octanoyltransferase, mitochondrial (LIP2).